Reading from the N-terminus, the 383-residue chain is Spermidine/putrescine import ATP-binding protein PotA (383 aa).

Residues 12–246 (IALRDISKVY…PSTPFVAGFI (235 aa)) form the ABC transporter domain. Residue 48 to 55 (GPSGCGKT) participates in ATP binding.

The protein belongs to the ABC transporter superfamily. Spermidine/putrescine importer (TC 3.A.1.11.1) family. In terms of assembly, the complex is composed of two ATP-binding proteins (PotA), two transmembrane proteins (PotB and PotC) and a solute-binding protein (PotD).

The protein localises to the cell membrane. The catalysed reaction is ATP + H2O + polyamine-[polyamine-binding protein]Side 1 = ADP + phosphate + polyamineSide 2 + [polyamine-binding protein]Side 1.. Part of the ABC transporter complex PotABCD involved in spermidine/putrescine import. Responsible for energy coupling to the transport system. The protein is Spermidine/putrescine import ATP-binding protein PotA of Acidothermus cellulolyticus (strain ATCC 43068 / DSM 8971 / 11B).